The primary structure comprises 457 residues: Siroheme synthase 2 (457 aa).

Residues 1-204 (MDHLPIFCQL…DDRQAVADTT (204 aa)) are precorrin-2 dehydrogenase /sirohydrochlorin ferrochelatase. NAD(+) contacts are provided by residues 22–23 (DV) and 43–44 (LD). Position 128 is a phosphoserine (Ser128). The segment at 216–457 (GEVVLVGAGP…RDKLNWFSNH (242 aa)) is uroporphyrinogen-III C-methyltransferase. Pro225 contacts S-adenosyl-L-methionine. Asp248 acts as the Proton acceptor in catalysis. The active-site Proton donor is Lys270. S-adenosyl-L-methionine contacts are provided by residues 301–303 (GGD), Ile306, 331–332 (TA), Met382, and Gly411.

This sequence in the N-terminal section; belongs to the precorrin-2 dehydrogenase / sirohydrochlorin ferrochelatase family. It in the C-terminal section; belongs to the precorrin methyltransferase family.

The catalysed reaction is uroporphyrinogen III + 2 S-adenosyl-L-methionine = precorrin-2 + 2 S-adenosyl-L-homocysteine + H(+). It carries out the reaction precorrin-2 + NAD(+) = sirohydrochlorin + NADH + 2 H(+). The enzyme catalyses siroheme + 2 H(+) = sirohydrochlorin + Fe(2+). It functions in the pathway cofactor biosynthesis; adenosylcobalamin biosynthesis; precorrin-2 from uroporphyrinogen III: step 1/1. The protein operates within cofactor biosynthesis; adenosylcobalamin biosynthesis; sirohydrochlorin from precorrin-2: step 1/1. Its pathway is porphyrin-containing compound metabolism; siroheme biosynthesis; precorrin-2 from uroporphyrinogen III: step 1/1. It participates in porphyrin-containing compound metabolism; siroheme biosynthesis; siroheme from sirohydrochlorin: step 1/1. It functions in the pathway porphyrin-containing compound metabolism; siroheme biosynthesis; sirohydrochlorin from precorrin-2: step 1/1. Functionally, multifunctional enzyme that catalyzes the SAM-dependent methylations of uroporphyrinogen III at position C-2 and C-7 to form precorrin-2 via precorrin-1. Then it catalyzes the NAD-dependent ring dehydrogenation of precorrin-2 to yield sirohydrochlorin. Finally, it catalyzes the ferrochelation of sirohydrochlorin to yield siroheme. In Klebsiella pneumoniae subsp. pneumoniae (strain ATCC 700721 / MGH 78578), this protein is Siroheme synthase 2.